A 796-amino-acid chain; its full sequence is Disintegrin and metalloproteinase domain-containing protein B (796 aa).

The first 23 residues, 1 to 23 (MKALSCLLAVIATAGSLFQHVDA), serve as a signal peptide directing secretion. Topologically, residues 24-706 (RSHARDRLNN…VSDWVSRHKP (683 aa)) are extracellular. Residues Asn-33, Asn-226, Asn-313, and Asn-407 are each glycosylated (N-linked (GlcNAc...) asparagine). The region spanning 271–510 (RVALIGVVAD…HSILTNCLTT (240 aa)) is the Peptidase M12B domain. Cystine bridges form between Cys-395–Cys-495, Cys-448–Cys-459, and Cys-580–Cys-600. Zn(2+) is bound at residue His-431. Glu-432 is a catalytic residue. His-435 and His-441 together coordinate Zn(2+). One can recognise a Disintegrin domain in the interval 519–608 (GQQCGNGIVE…DCPRDTHSKN (90 aa)). Residues 707 to 727 (IVIGVAVGVGCLLLLAILSCI) traverse the membrane as a helical segment. Over 728 to 796 (CGRSKKRRPR…PGRMPSTRYA (69 aa)) the chain is Cytoplasmic. The segment at 737–796 (RNRKMAPINMRPMPPVYNGWTGPPPNAESPGGHPQYNHVPPPINAPPPAYPGRMPSTRYA) is disordered. Residues 775–786 (VPPPINAPPPAY) are compositionally biased toward pro residues.

Zn(2+) is required as a cofactor.

It localises to the membrane. Probable zinc protease. This Arthroderma otae (strain ATCC MYA-4605 / CBS 113480) (Microsporum canis) protein is Disintegrin and metalloproteinase domain-containing protein B (ADM-B).